Here is a 348-residue protein sequence, read N- to C-terminus: GTPase Obg (348 aa).

One can recognise an Obg domain in the interval Met-1 to Ile-159. The OBG-type G domain occupies Ala-160–Trp-327. GTP contacts are provided by residues Gly-166–Ser-173, Phe-191–Thr-195, Asp-212–Gly-215, Asn-279–Asp-282, and Ser-308–Val-310. Ser-173 and Thr-193 together coordinate Mg(2+).

This sequence belongs to the TRAFAC class OBG-HflX-like GTPase superfamily. OBG GTPase family. In terms of assembly, monomer. It depends on Mg(2+) as a cofactor.

Its subcellular location is the cytoplasm. An essential GTPase which binds GTP, GDP and possibly (p)ppGpp with moderate affinity, with high nucleotide exchange rates and a fairly low GTP hydrolysis rate. Plays a role in control of the cell cycle, stress response, ribosome biogenesis and in those bacteria that undergo differentiation, in morphogenesis control. In Parvibaculum lavamentivorans (strain DS-1 / DSM 13023 / NCIMB 13966), this protein is GTPase Obg.